A 67-amino-acid chain; its full sequence is Conotoxin AbVIN (67 aa).

A signal peptide spans 1–17 (VIIIAVLFLTACQLIAT). A propeptide spanning residues 18-40 (ASYARSERKHPDLRLSSRNSKLS) is cleaved from the precursor. 3 disulfides stabilise this stretch: Cys43–Cys57, Cys50–Cys61, and Cys56–Cys66.

The protein belongs to the conotoxin O1 superfamily. Expressed by the venom duct.

Its subcellular location is the secreted. The chain is Conotoxin AbVIN from Conus abbreviatus (Abbreviated cone).